The chain runs to 782 residues: Protein VAC14 homolog (782 aa).

Residue methionine 1 is modified to N-acetylmethionine. HEAT repeat units follow at residues 5-42 (KDFA…EFVA), 89-126 (LYLK…VARG), 171-208 (FDLV…VPDI), and 212-249 (DYLP…EIKK). At threonine 11 the chain carries Phosphothreonine. 2 disordered regions span residues 335 to 372 (EDDE…DGSC) and 471 to 517 (SSPA…LECS). Residues 438 to 475 (RHTDSLFPILLQTLSDESDEVILKDLEVLAEIASSPAG) form an HEAT 5 repeat. Residues 478-488 (DDPGPLDGPDL) are compositionally biased toward low complexity. A Phosphothreonine modification is found at threonine 499. A compositionally biased stretch (polar residues) spans 506 to 517 (LNTSGTKGLECS). At serine 517 the chain carries Phosphoserine. The HEAT 6 repeat unit spans residues 560–598 (LNAENIFHSMADILLREEDLKFASTMVHALNTILLTSTE). Serine 743 is subject to Phosphoserine. The mediates interaction with the PDZ domain of NOS1 stretch occupies residues 773–777 (GDHLD).

Belongs to the VAC14 family. Forms pentamers. Component of the PI(3,5)P2 regulatory complex/PAS complex, at least composed of PIKFYVE, FIG4 and VAC14. VAC14 nucleates the assembly of the complex and serves as a scaffold by pentamerizing into a star-shaped structure, which can bind a single copy each of PIKFYVE and FIG4 and coordinates their activities. Interacts with NOS1. In terms of assembly, (Microbial infection) Interacts with HTLV-1 Tax. As to expression, ubiquitously expressed.

It localises to the endosome membrane. Its subcellular location is the microsome membrane. Scaffold protein component of the PI(3,5)P2 regulatory complex which regulates both the synthesis and turnover of phosphatidylinositol 3,5-bisphosphate (PtdIns(3,5)P2). Pentamerizes into a star-shaped structure and nucleates the assembly of the complex. The pentamer binds a single copy each of PIKFYVE and FIG4 and coordinates both PIKfyve kinase activity and FIG4 phosphatase activity, being required to maintain normal levels of phosphatidylinositol 3-phosphate (PtdIns(3)P) and phosphatidylinositol 5-phosphate (PtdIns(5)P). Plays a role in the biogenesis of endosome carrier vesicles (ECV) / multivesicular bodies (MVB) transport intermediates from early endosomes. The chain is Protein VAC14 homolog (VAC14) from Homo sapiens (Human).